The following is a 2062-amino-acid chain: Unconventional myosin-X (2062 aa).

Met-1 is modified (N-acetylmethionine). A Myosin motor domain is found at 63–739 (EGVDDMASLA…LEQKLEKRRE (677 aa)). ATP-binding positions include Asn-104, Tyr-113, 160–165 (GAGKTE), and Asn-215. The tract at residues 619–641 (LHSLMATLSSSNPFFVRCIKPNT) is actin-binding. IQ domains are found at residues 742-771 (IDRA…GVVT), 765-794 (VLCG…AAIV), and 788-817 (LKKA…EKRE). Positions 814–882 (EKRELEEKKR…LTRELEKQRE (69 aa)) are SAH. Residues 822–844 (KRREEEKKREEEERERERAQREA) form a disordered region. The stretch at 883-933 (NKQVEEILRLEKEIEDLQRMKERQELSLTEASLQKLQQLRDEELRRLEDEA) forms a coiled coil. Phosphoserine occurs at positions 961, 964, and 967. Disordered regions lie at residues 963–1047 (GSEI…VVPT) and 1062–1089 (QDSA…LPSP). Positions 993 to 1007 (AEEEVDEGFEADDDA) are enriched in acidic residues. Residues 1062–1085 (QDSASLHNSSSGESTYCMPQNNGD) show a composition bias toward polar residues. Residue Thr-1162 is modified to Phosphothreonine. 2 PH domains span residues 1216 to 1314 (EALK…QVHS) and 1396 to 1501 (EFIV…NVTD). Positions 1551 to 1699 (LPYGDINLNL…PSRDEIEALI (149 aa)) constitute a MyTH4 domain. The FERM domain maps to 1704-2048 (MTSTVYCHGG…AYISMIVKKR (345 aa)).

The protein belongs to the TRAFAC class myosin-kinesin ATPase superfamily. Myosin family. In terms of assembly, monomer, when in an inactive conformation in the cytosol. Homodimer in its active, membrane-bound conformation; antiparallel coiled coil-mediated dimer formation. Interacts with ECPAS. Interacts with DCC and ITGB5; the presence of DCC inhibits ITGB5 binding. Interacts with tubulin; ITGB5 or DCC binding inhibits tubulin binding. Interacts strongly with CALM3 and weakly with CALM, the CALM3 interaction is essential for function in filopodial extension and motility. Interacts with ITGB1, ITGB3 and ITGB5. Interacts with NEO1. Interacts with VASP. Post-translationally, the initiator methionine for isoform Headless is removed. Detected in brain, heart, kidney, liver, stomach, skeletal muscle, lung, testis and skin. Isoform Headless is expressed in embryonic and neuronal stem cells, and enriched in proliferating and migrating cells.

It is found in the cytoplasm. The protein localises to the cytosol. Its subcellular location is the cell projection. The protein resides in the lamellipodium. It localises to the ruffle. It is found in the cytoskeleton. The protein localises to the filopodium tip. Its subcellular location is the cell cortex. The protein resides in the filopodium membrane. Its function is as follows. Myosins are actin-based motor molecules with ATPase activity. Unconventional myosins serve in intracellular movements. MYO10 binds to actin filaments and actin bundles and functions as a plus end-directed motor. Moves with higher velocity and takes larger steps on actin bundles than on single actin filaments. The tail domain binds to membranous compartments containing phosphatidylinositol 3,4,5-trisphosphate or integrins, and mediates cargo transport along actin filaments. Regulates cell shape, cell spreading and cell adhesion. Stimulates the formation and elongation of filopodia. In hippocampal neurons it induces the formation of dendritic filopodia by trafficking the actin-remodeling protein VASP to the tips of filopodia, where it promotes actin elongation. Plays a role in formation of the podosome belt in osteoclasts. Functions as a dominant-negative regulator of isoform 1, suppressing its filopodia-inducing and axon outgrowth-promoting activities. In hippocampal neurons, it increases VASP retention in spine heads to induce spine formation and spine head expansion. The polypeptide is Unconventional myosin-X (Myo10) (Mus musculus (Mouse)).